We begin with the raw amino-acid sequence, 575 residues long: Melatonin-related receptor (575 aa).

The Extracellular segment spans residues 1 to 30 (MGRTLAVPTPYGCIGCKLPQPDYPPALIVF). Residues 31–51 (MFCAMVITIVVDLIGNSMVIL) form a helical membrane-spanning segment. The Cytoplasmic segment spans residues 52-64 (AVSKNKKLRNSGN). Residues 65–85 (VFVVSLSVADMLVAIYPYPLM) form a helical membrane-spanning segment. At 86 to 103 (LHAMAIGGWDLSKLQCQM) the chain is on the extracellular side. C101 and C178 are joined by a disulfide. A helical membrane pass occupies residues 104-124 (VGFITGLSVVGSIFNIMAIAI). Over 125 to 143 (NRYCYICHSLQYERIFSVR) the chain is Cytoplasmic. The chain crosses the membrane as a helical span at residues 144–164 (NTCIYLAVTWIMTVLAVLPNM). Over 165-188 (YIGTIEYDPRTYTCIFNYVNNPAF) the chain is Extracellular. The helical transmembrane segment at 189 to 209 (AVTIVCIHFVLPLLIVGFCYV) threads the bilayer. The Cytoplasmic segment spans residues 210 to 239 (KIWTKVLAARDPAGQNPDNQLAEVRNFLTM). The chain crosses the membrane as a helical span at residues 240–260 (FVIFLLFAVCWCPINALTVLV). Residues 261–273 (AVNPKEMAGKIPN) are Extracellular-facing. The chain crosses the membrane as a helical span at residues 274 to 294 (WVYLAAYFIAYFNSCLNAVIY). Residues 295–575 (GVLNENFRRE…VDADSDEMAV (281 aa)) lie on the Cytoplasmic side of the membrane. Disordered regions lie at residues 368 to 421 (VPLP…TVYP) and 446 to 474 (SSHP…TGYT). Residues 455 to 474 (PSKTAISPATSFPKPTTGYT) are compositionally biased toward polar residues.

The protein belongs to the G-protein coupled receptor 1 family. Homodimer, and heterodimer with MTNR1A and MTNR1B. Interacts with KAT5. Interacts with RTN4 isoform A/NOGO-A. Interacts with TGFBR1.

The protein resides in the cell membrane. G protein-coupled receptor that plays a role in numerous physiological processes including regulation of energy metabolism, neurite outgrowth or cell migration. Promotes self-renewal and neuronal differentiation of neural progenitor cells through activation of the NOTCH and WNT/beta-catenin signaling pathways. Modulates the KAT5-dependent glucocorticoid receptor signaling by modulating KAT5 subcellular compartmentalisation. Also plays a role in the activation TGFBR1 in the absence of TGFBR2 by interfering with FKBP1A binding to TGFBR1, leading to induction of both canonical and non-canonical SMAD signaling pathways resulting in inhibition of proliferation or promotion of migration. The protein is Melatonin-related receptor (GPR50) of Ovis aries (Sheep).